The following is a 68-amino-acid chain: Pleurocidin (68 aa).

The signal sequence occupies residues 1–22 (MKFTATFLMIAIFVLMVEPGEC). A propeptide spanning residues 48–68 (GDKQELNKRAVDEDPNVIVFE) is cleaved from the precursor.

This sequence belongs to the pleurocidin family. Goblet cells.

It is found in the secreted. Antimicrobial peptide with potent activity against Gram-positive and Gram-negative bacteria. Activity against E.coli and B.subtilis. Weaker activity against L.mucor, s.marcescens and P.aeruginosa. May play a role in innate host defense. The sequence is that of Pleurocidin (ple2) from Pseudopleuronectes americanus (Winter flounder).